Reading from the N-terminus, the 348-residue chain is Chaperone protein DnaJ (348 aa).

The region spanning 3–65 is the J domain; sequence DLYGILGVDH…EQRQRYDRHV (63 aa). Residues 109–191 form a CR-type zinc finger; sequence GGSQVVKIDS…CYGNGSRSAP (83 aa). Cysteine 122, cysteine 125, cysteine 139, cysteine 142, cysteine 165, cysteine 168, cysteine 179, and cysteine 182 together coordinate Zn(2+). 4 CXXCXGXG motif repeats span residues 122–129, 139–146, 165–172, and 179–186; these read CDVCNGTR, CFDCNGSG, CSKCRGNG, and CRRCYGNG.

Belongs to the DnaJ family. In terms of assembly, homodimer. It depends on Zn(2+) as a cofactor.

The protein localises to the cytoplasm. Participates actively in the response to hyperosmotic and heat shock by preventing the aggregation of stress-denatured proteins and by disaggregating proteins, also in an autonomous, DnaK-independent fashion. Unfolded proteins bind initially to DnaJ; upon interaction with the DnaJ-bound protein, DnaK hydrolyzes its bound ATP, resulting in the formation of a stable complex. GrpE releases ADP from DnaK; ATP binding to DnaK triggers the release of the substrate protein, thus completing the reaction cycle. Several rounds of ATP-dependent interactions between DnaJ, DnaK and GrpE are required for fully efficient folding. Also involved, together with DnaK and GrpE, in the DNA replication of plasmids through activation of initiation proteins. The protein is Chaperone protein DnaJ of Tropheryma whipplei (strain TW08/27) (Whipple's bacillus).